Here is a 523-residue protein sequence, read N- to C-terminus: Glutamate--cysteine ligase, chloroplastic (523 aa).

Cysteine 187 and cysteine 407 are oxidised to a cystine.

This sequence belongs to the carboxylate-amine ligase family. Glutamate--cysteine ligase type 2 subfamily. As to quaternary structure, homodimer or monomer when oxidized or reduced, respectively. The Cys-187-Cys-407 disulfide bridge is known to modulate the enzyme activity according to the redox status. The oxidized form constitutes the active enzyme.

It localises to the plastid. The protein localises to the chloroplast. It carries out the reaction L-cysteine + L-glutamate + ATP = gamma-L-glutamyl-L-cysteine + ADP + phosphate + H(+). Its pathway is sulfur metabolism; glutathione biosynthesis; glutathione from L-cysteine and L-glutamate: step 1/2. The sequence is that of Glutamate--cysteine ligase, chloroplastic (GSH1) from Solanum lycopersicum (Tomato).